Consider the following 306-residue polypeptide: NAD kinase 1 (306 aa).

The active-site Proton acceptor is Asp-67. Residues 67–68 (DG), 149–150 (NE), and Asp-181 each bind NAD(+).

Belongs to the NAD kinase family. Requires a divalent metal cation as cofactor.

The protein resides in the cytoplasm. It carries out the reaction NAD(+) + ATP = ADP + NADP(+) + H(+). In terms of biological role, involved in the regulation of the intracellular balance of NAD and NADP, and is a key enzyme in the biosynthesis of NADP. Catalyzes specifically the phosphorylation on 2'-hydroxyl of the adenosine moiety of NAD to yield NADP. In Thermosynechococcus vestitus (strain NIES-2133 / IAM M-273 / BP-1), this protein is NAD kinase 1.